Here is a 176-residue protein sequence, read N- to C-terminus: Heme oxygenase HutZ (176 aa).

Heme is bound at residue H170.

The protein belongs to the heme oxygenase HugZ/HutZ family. Homodimer. Interacts with HutX, leading to the transfer of the heme from HutX to apo-HutZ.

It carries out the reaction heme b + 3 AH2 + 3 O2 + 2 H(+) = biliverdin IXbeta + CO + Fe(2+) + 3 A + 3 H2O. It catalyses the reaction heme b + 3 AH2 + 3 O2 + 3 H(+) = biliverdin IXdelta + CO + Fe(2+) + 3 A + 3 H2O. Activity is pH-dependent. A proximal hydrogen bond between Asp-132 and the heme axial ligant His-170 is essential for heme degradation activity. Heme-degradation reaction is inhibited by iron chelators. In terms of biological role, involved in heme degradation. Catalyzes the degradation of heme to biliverdin, with the release of iron. Forms biliverdin beta and delta. Binds heme with high efficiency. The polypeptide is Heme oxygenase HutZ (Vibrio cholerae serotype O1 (strain ATCC 39315 / El Tor Inaba N16961)).